Here is a 432-residue protein sequence, read N- to C-terminus: Trigger factor (432 aa).

A PPIase FKBP-type domain is found at 161 to 246 (EDRVTIDFTG…LKKVEERELP (86 aa)).

This sequence belongs to the FKBP-type PPIase family. Tig subfamily.

The protein resides in the cytoplasm. The enzyme catalyses [protein]-peptidylproline (omega=180) = [protein]-peptidylproline (omega=0). In terms of biological role, involved in protein export. Acts as a chaperone by maintaining the newly synthesized protein in an open conformation. Functions as a peptidyl-prolyl cis-trans isomerase. This is Trigger factor from Salmonella schwarzengrund (strain CVM19633).